Consider the following 229-residue polypeptide: Large ribosomal subunit protein uL1 (229 aa).

The protein belongs to the universal ribosomal protein uL1 family. As to quaternary structure, part of the 50S ribosomal subunit.

Its function is as follows. Binds directly to 23S rRNA. The L1 stalk is quite mobile in the ribosome, and is involved in E site tRNA release. Functionally, protein L1 is also a translational repressor protein, it controls the translation of the L11 operon by binding to its mRNA. In Thermus thermophilus (strain ATCC BAA-163 / DSM 7039 / HB27), this protein is Large ribosomal subunit protein uL1.